Consider the following 65-residue polypeptide: Hirudin-3A (65 aa).

The tract at residues valine 1–tyrosine 3 is interaction with thrombin active site. 3 cysteine pairs are disulfide-bonded: cysteine 6-cysteine 14, cysteine 16-cysteine 28, and cysteine 22-cysteine 39. The disordered stretch occupies residues cysteine 39–glutamine 65. Threonine 45 is a glycosylation site (O-linked (GalNAc...) threonine). Residues aspartate 55–glutamine 65 form an interaction with fibrinogen-binding exosite of thrombin region. Positions aspartate 55–glutamine 65 are enriched in acidic residues. A Sulfotyrosine modification is found at tyrosine 63.

Belongs to the protease inhibitor I14 (hirudin) family.

It localises to the secreted. In terms of biological role, hirudin is a potent thrombin-specific protease inhibitor. It forms a stable non-covalent complex with alpha-thrombin, thereby abolishing its ability to cleave fibrinogen. The polypeptide is Hirudin-3A (Hirudo medicinalis (Medicinal leech)).